Here is a 355-residue protein sequence, read N- to C-terminus: 3,4-dihydroxy-2-butanone 4-phosphate synthase (355 aa).

The DHBP synthase stretch occupies residues 1–202; that stretch reads MYHKRIKEAI…VSDIIQYRLN (202 aa). D-ribulose 5-phosphate is bound by residues 27–28, Asp-32, 139–143, and Glu-163; these read RE and RTGHT. Glu-28 contacts Mg(2+). His-142 is a Mg(2+) binding site. Residues 203 to 355 form a GTP cyclohydrolase II-like region; sequence FENLLREITR…NLHLVEKIEV (153 aa).

It in the N-terminal section; belongs to the DHBP synthase family. This sequence in the C-terminal section; belongs to the GTP cyclohydrolase II family. Mg(2+) serves as cofactor. The cofactor is Mn(2+).

The enzyme catalyses D-ribulose 5-phosphate = (2S)-2-hydroxy-3-oxobutyl phosphate + formate + H(+). The protein operates within cofactor biosynthesis; riboflavin biosynthesis; 2-hydroxy-3-oxobutyl phosphate from D-ribulose 5-phosphate: step 1/1. Catalyzes the conversion of D-ribulose 5-phosphate to formate and 3,4-dihydroxy-2-butanone 4-phosphate. The sequence is that of 3,4-dihydroxy-2-butanone 4-phosphate synthase (ribB) from Helicobacter hepaticus (strain ATCC 51449 / 3B1).